A 173-amino-acid chain; its full sequence is Putative 2-oxo-4-hydroxy-4-carboxy-5-ureidoimidazoline decarboxylase (173 aa).

His67 acts as the Proton donor in catalysis. Substrate contacts are provided by residues Pro68, 84 to 88 (SQREQ), and 119 to 123 (FVLAA). Residues 171-173 (AKL) carry the Microbody targeting signal motif.

It belongs to the OHCU decarboxylase family. As to expression, apparently not expressed.

Its subcellular location is the peroxisome. It catalyses the reaction 5-hydroxy-2-oxo-4-ureido-2,5-dihydro-1H-imidazole-5-carboxylate + H(+) = (S)-allantoin + CO2. It functions in the pathway purine metabolism; urate degradation; (S)-allantoin from urate: step 3/3. Its function is as follows. Catalyzes the stereoselective decarboxylation of 2-oxo-4-hydroxy-4-carboxy-5-ureidoimidazoline (OHCU) to (S)-allantoin. The polypeptide is Putative 2-oxo-4-hydroxy-4-carboxy-5-ureidoimidazoline decarboxylase (URAD) (Homo sapiens (Human)).